The primary structure comprises 384 residues: GTPase Obg (384 aa).

The 159-residue stretch at 1–159 folds into the Obg domain; sequence MKFIDEAKIE…RSLQLELKVL (159 aa). The segment at 20–46 is disordered; sequence ATSFRREKFVPRGGPDGGDGGKGGSVW. Gly residues predominate over residues 33 to 43; it reads GPDGGDGGKGG. The region spanning 160–348 is the OBG-type G domain; it reads ADVGLLGMPN…LVHQINQYLT (189 aa). Residues 166 to 173, 191 to 195, 213 to 216, 284 to 287, and 329 to 331 each bind GTP; these read GMPNAGKS, FTTLH, DIPG, NKLD, and SAL. Mg(2+)-binding residues include Ser173 and Thr193.

The protein belongs to the TRAFAC class OBG-HflX-like GTPase superfamily. OBG GTPase family. In terms of assembly, monomer. The cofactor is Mg(2+).

The protein resides in the cytoplasm. In terms of biological role, an essential GTPase which binds GTP, GDP and possibly (p)ppGpp with moderate affinity, with high nucleotide exchange rates and a fairly low GTP hydrolysis rate. Plays a role in control of the cell cycle, stress response, ribosome biogenesis and in those bacteria that undergo differentiation, in morphogenesis control. The protein is GTPase Obg of Neisseria meningitidis serogroup C (strain 053442).